The chain runs to 266 residues: Ribonuclease 3 (266 aa).

A disordered region spans residues 1-35 (MMDESADIKPVPTSEDVAAPSGTEPVAPAPKKKRA). Positions 43 to 171 (MAAIEQRLGH…VIGAVYLDGG (129 aa)) constitute an RNase III domain. A Mg(2+)-binding site is contributed by E84. D88 is an active-site residue. Mg(2+) contacts are provided by D157 and E160. Residue E160 is part of the active site. The 70-residue stretch at 196 to 265 (DPKTVLQEWA…ASAMIVREGV (70 aa)) folds into the DRBM domain.

This sequence belongs to the ribonuclease III family. In terms of assembly, homodimer. It depends on Mg(2+) as a cofactor.

Its subcellular location is the cytoplasm. The enzyme catalyses Endonucleolytic cleavage to 5'-phosphomonoester.. Functionally, digests double-stranded RNA. Involved in the processing of primary rRNA transcript to yield the immediate precursors to the large and small rRNAs (23S and 16S). Processes some mRNAs, and tRNAs when they are encoded in the rRNA operon. Processes pre-crRNA and tracrRNA of type II CRISPR loci if present in the organism. This Nitrobacter winogradskyi (strain ATCC 25391 / DSM 10237 / CIP 104748 / NCIMB 11846 / Nb-255) protein is Ribonuclease 3.